The sequence spans 859 residues: DNA mismatch repair protein MutS (859 aa).

618–625 (GPNMGGKS) lines the ATP pocket.

It belongs to the DNA mismatch repair MutS family.

In terms of biological role, this protein is involved in the repair of mismatches in DNA. It is possible that it carries out the mismatch recognition step. This protein has a weak ATPase activity. This is DNA mismatch repair protein MutS from Shewanella sediminis (strain HAW-EB3).